Consider the following 75-residue polypeptide: Conotoxin Leo-O3 (75 aa).

Residues 1-22 (MKLTCVVIVAVLFLTACQLATA) form the signal peptide. Residues 23-42 (DISGGMRKHRALRSTTKLSR) constitute a propeptide that is removed on maturation. 3 cysteine pairs are disulfide-bonded: C47–C60, C54–C63, and C59–C69. C69 is subject to Cysteine amide. Residues 70–75 (GSGLHV) constitute a propeptide that is removed on maturation.

This sequence belongs to the conotoxin O1 superfamily. Expressed by the venom duct.

It localises to the secreted. This chain is Conotoxin Leo-O3, found in Conus leopardus (Leopard cone).